Consider the following 645-residue polypeptide: Chaperone protein DnaK (645 aa).

Phosphothreonine; by autocatalysis is present on Thr201. Residues 606–629 (NTNNATAGDNNTTDTGSSSNSDGS) show a composition bias toward low complexity. The tract at residues 606–645 (NTNNATAGDNNTTDTGSSSNSDGSKVVDSDYQEIDKKDGK) is disordered. The segment covering 630–645 (KVVDSDYQEIDKKDGK) has biased composition (basic and acidic residues).

This sequence belongs to the heat shock protein 70 family.

Its function is as follows. Acts as a chaperone. The polypeptide is Chaperone protein DnaK (Ehrlichia ruminantium (strain Gardel)).